The chain runs to 292 residues: AT-hook motif nuclear-localized protein 23 (292 aa).

A disordered region spans residues 23 to 100; it reads HLHHNSSSDD…SKNKPKPPVI (78 aa). Gly residues predominate over residues 60-79; sequence SGGGSGSSGGGGGHGGGGDV. A DNA-binding region (a.T hook) is located at residues 82 to 94; the sequence is RRPRGRPPGSKNK. Positions 106-242 constitute a PPC domain; the sequence is ANTLRAHILE…EDEQQQQLGG (137 aa).

The protein resides in the nucleus. Transcription factor that specifically binds AT-rich DNA sequences related to the nuclear matrix attachment regions (MARs). This chain is AT-hook motif nuclear-localized protein 23, found in Arabidopsis thaliana (Mouse-ear cress).